The primary structure comprises 473 residues: Photosystem II CP43 reaction center protein (473 aa).

The propeptide occupies 1 to 14 (MKTLYSPRRYYPVE). At Thr-15 the chain carries N-acetylthreonine. Thr-15 is subject to Phosphothreonine. 5 consecutive transmembrane segments (helical) span residues 69 to 93 (LFEV…PHLA), 134 to 155 (IIGP…KDKN), 178 to 200 (KAVW…RVIT), 255 to 275 (KPFA…LSYS), and 291 to 312 (WFNN…ASQA). Glu-367 lines the [CaMn4O5] cluster pocket. The chain crosses the membrane as a helical span at residues 447–471 (RARAAAAGFEKGIERETEPVLFMSP).

Belongs to the PsbB/PsbC family. PsbC subfamily. PSII is composed of 1 copy each of membrane proteins PsbA, PsbB, PsbC, PsbD, PsbE, PsbF, PsbH, PsbI, PsbJ, PsbK, PsbL, PsbM, PsbT, PsbX, PsbY, PsbZ, Psb30/Ycf12, at least 3 peripheral proteins of the oxygen-evolving complex and a large number of cofactors. It forms dimeric complexes. Binds multiple chlorophylls and provides some of the ligands for the Ca-4Mn-5O cluster of the oxygen-evolving complex. It may also provide a ligand for a Cl- that is required for oxygen evolution. PSII binds additional chlorophylls, carotenoids and specific lipids. serves as cofactor.

It localises to the plastid. Its subcellular location is the chloroplast thylakoid membrane. Functionally, one of the components of the core complex of photosystem II (PSII). It binds chlorophyll and helps catalyze the primary light-induced photochemical processes of PSII. PSII is a light-driven water:plastoquinone oxidoreductase, using light energy to abstract electrons from H(2)O, generating O(2) and a proton gradient subsequently used for ATP formation. This Chaetosphaeridium globosum (Charophycean green alga) protein is Photosystem II CP43 reaction center protein.